Here is a 348-residue protein sequence, read N- to C-terminus: Inactive rhomboid-related protein 2 (348 aa).

Residues 14–49 (IEASSWIRIFRAFDTDHDGLIQCEEMQKTIRDSTYS) form the EF-hand domain. Positions 27, 29, 31, and 38 each coordinate Ca(2+). 7 helical membrane passes run 121-141 (PPIF…YYVV), 177-197 (LINV…AIGV), 207-227 (IYIL…ALDP), 229-249 (VFLC…ITTI), 263-283 (LPIL…QRFF), 290-310 (VSMY…FILF), and 323-343 (FWVS…LIAA).

This sequence belongs to the peptidase S54 family.

The protein resides in the membrane. Probable inactive serine protease. The sequence is that of Inactive rhomboid-related protein 2 from Caenorhabditis elegans.